The sequence spans 645 residues: MTDRPQTPLLDQIASPADLKRLSDAQLEQVAHELRQETISAVSVTGGHLGAGLGVVELTVALHSVFDTPKDKVIWDVSHQCYPHKILTGRRDRIRTLRMKDGLSGFTKRSESAFDPFGAAHSSTSISAALGFSVARDLGGVTEEGLGDAIAVIGDGAMSAGMAFEAMNNAGHLGKRLIVILNDNEMSIAPPVGALSSYLSRLYTEAPFHDLKAAAKGAVSLLPEPFREGAKRAKDMLKGMAMGGTLFESLGFSYIGPIDGHDMDQLLPVLRTVKARAAGPILIHAVTKKGKGYRPAEVARDKGHATAKFDMVTGEQKKAPSNAPSYTSVFGKTLTDLAAQDSKICAVTAAMPDGTGLNLMAERYPSRTFDVGIAEQHGVTFAAALAAGGMKPFCAMYSTFLQRGYDQVVHDVAIQRLPVRFAIDRAGLVGADGATHAGSFDIAFMANLPGMVVMAAADEAELKHMVATAAAYDAGPIAFRYPRGEGEGVEMPEQPEVLEIGKGRIIEEGSRVALLSFGTRLGEVRKAAEALAARGITPTVADARFAKPLDRDMILSLAEKHEALITIEEGAVGGFGSHVAQLLSEEAVFDTGLKFRSMVLPDTFIDQASPKDMYDSAAMNAEHIEAKVLDVLGVARLDERRLPAS.

Thiamine diphosphate contacts are provided by residues histidine 79 and alanine 120–serine 122. Aspartate 155 contributes to the Mg(2+) binding site. Thiamine diphosphate contacts are provided by residues glycine 156–alanine 157, asparagine 184, tyrosine 293, and glutamate 375. Asparagine 184 is a Mg(2+) binding site.

This sequence belongs to the transketolase family. DXPS subfamily. As to quaternary structure, homodimer. Requires Mg(2+) as cofactor. The cofactor is thiamine diphosphate.

It catalyses the reaction D-glyceraldehyde 3-phosphate + pyruvate + H(+) = 1-deoxy-D-xylulose 5-phosphate + CO2. The protein operates within metabolic intermediate biosynthesis; 1-deoxy-D-xylulose 5-phosphate biosynthesis; 1-deoxy-D-xylulose 5-phosphate from D-glyceraldehyde 3-phosphate and pyruvate: step 1/1. Functionally, catalyzes the acyloin condensation reaction between C atoms 2 and 3 of pyruvate and glyceraldehyde 3-phosphate to yield 1-deoxy-D-xylulose-5-phosphate (DXP). This is 1-deoxy-D-xylulose-5-phosphate synthase from Ruegeria sp. (strain TM1040) (Silicibacter sp.).